The following is a 330-amino-acid chain: Aspartate--ammonia ligase (330 aa).

The protein belongs to the class-II aminoacyl-tRNA synthetase family. AsnA subfamily.

It is found in the cytoplasm. It carries out the reaction L-aspartate + NH4(+) + ATP = L-asparagine + AMP + diphosphate + H(+). It functions in the pathway amino-acid biosynthesis; L-asparagine biosynthesis; L-asparagine from L-aspartate (ammonia route): step 1/1. The polypeptide is Aspartate--ammonia ligase (Haemophilus influenzae (strain 86-028NP)).